Reading from the N-terminus, the 385-residue chain is 8-amino-7-oxononanoate synthase (385 aa).

Arginine 21 is a substrate binding site. 108 to 109 (GF) contacts pyridoxal 5'-phosphate. Residue histidine 133 coordinates substrate. 3 residues coordinate pyridoxal 5'-phosphate: serine 179, histidine 207, and threonine 233. N6-(pyridoxal phosphate)lysine is present on lysine 236. Residue threonine 352 participates in substrate binding.

Belongs to the class-II pyridoxal-phosphate-dependent aminotransferase family. BioF subfamily. Homodimer. Pyridoxal 5'-phosphate serves as cofactor.

The catalysed reaction is 6-carboxyhexanoyl-[ACP] + L-alanine + H(+) = (8S)-8-amino-7-oxononanoate + holo-[ACP] + CO2. It functions in the pathway cofactor biosynthesis; biotin biosynthesis. Catalyzes the decarboxylative condensation of pimeloyl-[acyl-carrier protein] and L-alanine to produce 8-amino-7-oxononanoate (AON), [acyl-carrier protein], and carbon dioxide. In Pseudescherichia vulneris (Escherichia vulneris), this protein is 8-amino-7-oxononanoate synthase.